Reading from the N-terminus, the 1343-residue chain is DNA-directed RNA polymerase subunit beta (1343 aa).

The protein belongs to the RNA polymerase beta chain family. In terms of assembly, the RNAP catalytic core consists of 2 alpha, 1 beta, 1 beta' and 1 omega subunit. When a sigma factor is associated with the core the holoenzyme is formed, which can initiate transcription.

It carries out the reaction RNA(n) + a ribonucleoside 5'-triphosphate = RNA(n+1) + diphosphate. Functionally, DNA-dependent RNA polymerase catalyzes the transcription of DNA into RNA using the four ribonucleoside triphosphates as substrates. This Shewanella piezotolerans (strain WP3 / JCM 13877) protein is DNA-directed RNA polymerase subunit beta.